A 179-amino-acid chain; its full sequence is Pyridoxal 5'-phosphate synthase subunit PdxT (179 aa).

Residue 48–50 coordinates L-glutamine; that stretch reads GES. Cysteine 79 serves as the catalytic Nucleophile. L-glutamine contacts are provided by residues arginine 101 and 127–128; that span reads IR. Active-site charge relay system residues include histidine 163 and glutamate 165.

It belongs to the glutaminase PdxT/SNO family. As to quaternary structure, in the presence of PdxS, forms a dodecamer of heterodimers. Only shows activity in the heterodimer.

The enzyme catalyses aldehydo-D-ribose 5-phosphate + D-glyceraldehyde 3-phosphate + L-glutamine = pyridoxal 5'-phosphate + L-glutamate + phosphate + 3 H2O + H(+). The catalysed reaction is L-glutamine + H2O = L-glutamate + NH4(+). The protein operates within cofactor biosynthesis; pyridoxal 5'-phosphate biosynthesis. Catalyzes the hydrolysis of glutamine to glutamate and ammonia as part of the biosynthesis of pyridoxal 5'-phosphate. The resulting ammonia molecule is channeled to the active site of PdxS. This Francisella tularensis subsp. tularensis (strain FSC 198) protein is Pyridoxal 5'-phosphate synthase subunit PdxT.